The following is an 81-amino-acid chain: Penaeidin-3c (81 aa).

The first 19 residues, 1 to 19, serve as a signal peptide directing secretion; it reads MRLVVCLVFLASFALVCQG. The residue at position 20 (glutamine 20) is a Pyrrolidone carboxylic acid. 3 cysteine pairs are disulfide-bonded: cysteine 50–cysteine 65, cysteine 54–cysteine 72, and cysteine 66–cysteine 73. Serine 80 carries the post-translational modification Serine amide.

It belongs to the penaeidin family. As to expression, higher expression in hemocytes and to a lesser extent in heart, testis, gills, intestine, lymphoid organ and hepatopancreas. Traces in eyes and subcuticular epithelium. Not present in the brain.

Its subcellular location is the cytoplasmic granule. Functionally, antibacterial activity against M.luteus and E.coli bacteria. Antifungal activity against N.crassa and F.oxysporum. Presents chitin-binding activity. This Penaeus vannamei (Whiteleg shrimp) protein is Penaeidin-3c.